Here is a 456-residue protein sequence, read N- to C-terminus: MSSSQQIAKNARKAGNILKTISNEGRSDILYKIHDALKANAHAIEEANKIDLAVAKETGLADSLLKRLDLFKGDKFEVMLQGIKDVAELEDPVGKVKMARELDDGLTLYQVTAPVGVLLVIFESRPEVIANITALSIKSGNAAILKGGKESVNTFREMAKIVNDTIAQFQSETGVPVGSVQLIETRQDVSDLLDQDEYIDLVVPRGSNALVRKIKDTTKIPVLGHADGICSIYLDEDADLIKAKRISLDAKTNYPAGCNAMETLLINPKFSKWWEVLENLTLEGGVTIHATKDLKTAYFDKLNELGKLTEAIQCKTVDADEEQDFDKEFLSLDLAAKFVTSTESAIQHINTHSSRHTDAIVTENKANAEKFMKGVDSSGVYWNASTRFADGFRYGFGAEVGISTSKIHARGPVGLDGLVSYQYQIRGDGQVASDYLGAGGNKAFVHKDLDIKTVTL.

S2 is modified (N-acetylserine).

Belongs to the gamma-glutamyl phosphate reductase family.

The catalysed reaction is L-glutamate 5-semialdehyde + phosphate + NADP(+) = L-glutamyl 5-phosphate + NADPH + H(+). The protein operates within amino-acid biosynthesis; L-proline biosynthesis; L-glutamate 5-semialdehyde from L-glutamate: step 2/2. Its function is as follows. Catalyzes the NADPH dependent reduction of L-gamma-glutamyl 5-phosphate into L-glutamate 5-semialdehyde and phosphate. The product spontaneously undergoes cyclization to form 1-pyrroline-5-carboxylate. This is Gamma-glutamyl phosphate reductase (PRO2) from Saccharomyces cerevisiae (strain ATCC 204508 / S288c) (Baker's yeast).